The following is a 301-amino-acid chain: Pantothenate synthetase (301 aa).

Residue 30–37 (MGNLHEGH) participates in ATP binding. Catalysis depends on histidine 37, which acts as the Proton donor. Glutamine 61 serves as a coordination point for (R)-pantoate. Glutamine 61 is a beta-alanine binding site. 149–152 (GEKD) contacts ATP. (R)-pantoate is bound at residue glutamine 155. Residues valine 178 and 186 to 189 (MSSR) contribute to the ATP site.

Belongs to the pantothenate synthetase family. In terms of assembly, homodimer.

The protein localises to the cytoplasm. The enzyme catalyses (R)-pantoate + beta-alanine + ATP = (R)-pantothenate + AMP + diphosphate + H(+). It functions in the pathway cofactor biosynthesis; (R)-pantothenate biosynthesis; (R)-pantothenate from (R)-pantoate and beta-alanine: step 1/1. Functionally, catalyzes the condensation of pantoate with beta-alanine in an ATP-dependent reaction via a pantoyl-adenylate intermediate. This chain is Pantothenate synthetase, found in Vibrio vulnificus (strain CMCP6).